Here is a 482-residue protein sequence, read N- to C-terminus: Ribosomal RNA small subunit methyltransferase F (482 aa).

S-adenosyl-L-methionine contacts are provided by residues 119-125 (ASAPGSK), Glu-143, Asp-170, and Asp-188. Residue Cys-241 is the Nucleophile of the active site.

The protein belongs to the class I-like SAM-binding methyltransferase superfamily. RsmB/NOP family.

The protein localises to the cytoplasm. It catalyses the reaction cytidine(1407) in 16S rRNA + S-adenosyl-L-methionine = 5-methylcytidine(1407) in 16S rRNA + S-adenosyl-L-homocysteine + H(+). In terms of biological role, specifically methylates the cytosine at position 1407 (m5C1407) of 16S rRNA. The chain is Ribosomal RNA small subunit methyltransferase F from Shewanella sp. (strain ANA-3).